Reading from the N-terminus, the 191-residue chain is dCTP deaminase, dUMP-forming (191 aa).

Residues 101 to 106, D119, 127 to 129, Q148, Y162, and Q174 each bind dCTP; these read KSSLGR and TLE. Residue E129 is the Proton donor/acceptor of the active site.

The protein belongs to the dCTP deaminase family. Homotrimer.

The enzyme catalyses dCTP + 2 H2O = dUMP + NH4(+) + diphosphate. Its pathway is pyrimidine metabolism; dUMP biosynthesis; dUMP from dCTP: step 1/1. Its function is as follows. Bifunctional enzyme that catalyzes both the deamination of dCTP to dUTP and the hydrolysis of dUTP to dUMP without releasing the toxic dUTP intermediate. The sequence is that of dCTP deaminase, dUMP-forming from Streptomyces coelicolor (strain ATCC BAA-471 / A3(2) / M145).